The following is a 285-amino-acid chain: (3S)-malyl-CoA thioesterase (285 aa).

Positions 70 and 122 each coordinate substrate. Mg(2+)-binding residues include Glu-122 and Asp-148.

It belongs to the HpcH/HpaI aldolase family. As to quaternary structure, homodimer or homotrimer. It depends on Mg(2+) as a cofactor.

The enzyme catalyses (S)-malyl-CoA + H2O = (S)-malate + CoA + H(+). Functionally, catalyzes the hydrolysis of (3S)-malyl-CoA to (3S)-malate and free CoA. Inactive towards beta-methylmalyl-CoA and other CoA esters. The chain is (3S)-malyl-CoA thioesterase from Cereibacter sphaeroides (strain ATCC 17025 / ATH 2.4.3) (Rhodobacter sphaeroides).